The primary structure comprises 258 residues: 6-carboxyhexanoate--CoA ligase (258 aa).

It belongs to the BioW family. As to quaternary structure, homodimer. The cofactor is Mg(2+).

The enzyme catalyses heptanedioate + ATP + CoA = 6-carboxyhexanoyl-CoA + AMP + diphosphate. Its pathway is metabolic intermediate metabolism; pimeloyl-CoA biosynthesis; pimeloyl-CoA from pimelate: step 1/1. Its function is as follows. Catalyzes the transformation of pimelate into pimeloyl-CoA with concomitant hydrolysis of ATP to AMP. The sequence is that of 6-carboxyhexanoate--CoA ligase from Bacillus spizizenii (strain ATCC 23059 / NRRL B-14472 / W23) (Bacillus subtilis subsp. spizizenii).